A 211-amino-acid chain; its full sequence is N-(5'-phosphoribosyl)anthranilate isomerase (211 aa).

It belongs to the TrpF family.

It carries out the reaction N-(5-phospho-beta-D-ribosyl)anthranilate = 1-(2-carboxyphenylamino)-1-deoxy-D-ribulose 5-phosphate. It functions in the pathway amino-acid biosynthesis; L-tryptophan biosynthesis; L-tryptophan from chorismate: step 3/5. In Desulfovibrio desulfuricans (strain ATCC 27774 / DSM 6949 / MB), this protein is N-(5'-phosphoribosyl)anthranilate isomerase.